The chain runs to 755 residues: 1,4-alpha-glucan branching enzyme GlgB (755 aa).

Catalysis depends on D431, which acts as the Nucleophile. E484 functions as the Proton donor in the catalytic mechanism.

The protein belongs to the glycosyl hydrolase 13 family. GlgB subfamily. In terms of assembly, monomer.

It carries out the reaction Transfers a segment of a (1-&gt;4)-alpha-D-glucan chain to a primary hydroxy group in a similar glucan chain.. It participates in glycan biosynthesis; glycogen biosynthesis. Functionally, catalyzes the formation of the alpha-1,6-glucosidic linkages in glycogen by scission of a 1,4-alpha-linked oligosaccharide from growing alpha-1,4-glucan chains and the subsequent attachment of the oligosaccharide to the alpha-1,6 position. The chain is 1,4-alpha-glucan branching enzyme GlgB from Prochlorococcus marinus (strain NATL2A).